Consider the following 38-residue polypeptide: DNA binding protein ORF8 (38 aa).

Belongs to the microviridae J protein family.

It is found in the virion. It localises to the host cytoplasm. Mediates ssDNA packaging into virion, it locates to the internal surface of the capsid, thereby displacing the internal scaffolding protein during virion formation. Additionally, protein ORF8 plays a role in viral attachment to the host cell. The sequence is that of DNA binding protein ORF8 from Spiroplasma melliferum (SpV4).